Reading from the N-terminus, the 46-residue chain is Large ribosomal subunit protein bL34c (46 aa).

The segment at 1–46 (MSKRTLEGSHRKKVRKSGFLSRSQSPTGRRILKARRKKGRKMLVKY) is disordered. Residues 30–46 (RILKARRKKGRKMLVKY) show a composition bias toward basic residues.

It belongs to the bacterial ribosomal protein bL34 family.

It localises to the plastid. The protein localises to the cyanelle. This chain is Large ribosomal subunit protein bL34c (rpl34), found in Cyanophora paradoxa.